Reading from the N-terminus, the 590-residue chain is DNA primase (590 aa).

Residues 37 to 61 form a CHC2-type zinc finger; sequence CPFHTEKTPSFIVNPAGAHYHCFGC. Residues 253–333 enclose the Toprim domain; the sequence is KKVILVEGQA…QMSVFVCKLP (81 aa). Positions 259, 304, and 306 each coordinate Mg(2+).

This sequence belongs to the DnaG primase family. In terms of assembly, monomer. Interacts with DnaB. It depends on Zn(2+) as a cofactor. The cofactor is Mg(2+).

The enzyme catalyses ssDNA + n NTP = ssDNA/pppN(pN)n-1 hybrid + (n-1) diphosphate.. RNA polymerase that catalyzes the synthesis of short RNA molecules used as primers for DNA polymerase during DNA replication. This chain is DNA primase, found in Chlamydia pneumoniae (Chlamydophila pneumoniae).